A 218-amino-acid polypeptide reads, in one-letter code: Zinc metalloproteinase-disintegrin-like bothrojarin-2 (218 aa).

The Disintegrin domain occupies Pro14–Asn100. The Ca(2+) site is built by Val16, Leu21, Glu23, Glu26, and Asp29. Intrachain disulfides connect Cys28–Cys46, Cys30–Cys41, Cys40–Cys63, Cys54–Cys60, Cys59–Cys85, Cys72–Cys92, Cys79–Cys111, Cys104–Cys116, Cys123–Cys173, and Cys151–Cys161. The short motif at Glu78 to Asp80 is the D/ECD-tripeptide element.

It belongs to the venom metalloproteinase (M12B) family. P-III subfamily. P-IIIa sub-subfamily. As to quaternary structure, monomer. It depends on Zn(2+) as a cofactor. Glycosylated. As to expression, expressed by the venom gland.

It localises to the secreted. In terms of biological role, the hemorrhagic metalloproteinase-disintegrin-like bothrojarin-1 is a potent inhibitor of collagen-induced platelet aggregation by blockage of alpha-2/beta-1 (ITGA2/ITGB1) integrin. It does not present any fibrinogen-clotting activity. The polypeptide is Zinc metalloproteinase-disintegrin-like bothrojarin-2 (Bothrops jararaca (Jararaca)).